Reading from the N-terminus, the 302-residue chain is Homoserine O-acetyltransferase (302 aa).

The Acyl-thioester intermediate role is filled by Cys142. Positions 163 and 192 each coordinate substrate. His235 acts as the Proton acceptor in catalysis. Residue Glu237 is part of the active site. Position 249 (Arg249) interacts with substrate.

Belongs to the MetA family.

It localises to the cytoplasm. The enzyme catalyses L-homoserine + acetyl-CoA = O-acetyl-L-homoserine + CoA. The protein operates within amino-acid biosynthesis; L-methionine biosynthesis via de novo pathway; O-acetyl-L-homoserine from L-homoserine: step 1/1. Transfers an acetyl group from acetyl-CoA to L-homoserine, forming acetyl-L-homoserine. The sequence is that of Homoserine O-acetyltransferase from Geobacillus kaustophilus (strain HTA426).